Reading from the N-terminus, the 517-residue chain is Crotonobetaine/carnitine--CoA ligase (517 aa).

It belongs to the ATP-dependent AMP-binding enzyme family.

It catalyses the reaction 4-(trimethylamino)butanoate + ATP + CoA = 4-(trimethylamino)butanoyl-CoA + AMP + diphosphate. It carries out the reaction crotonobetaine + ATP + CoA = crotonobetainyl-CoA + AMP + diphosphate. The catalysed reaction is (R)-carnitine + ATP + CoA = (R)-carnitinyl-CoA + AMP + diphosphate. The protein operates within amine and polyamine metabolism; carnitine metabolism. Functionally, catalyzes the transfer of CoA to carnitine, generating the initial carnitinyl-CoA needed for the CaiB reaction cycle. Also has activity toward crotonobetaine and gamma-butyrobetaine. This is Crotonobetaine/carnitine--CoA ligase from Salmonella choleraesuis (strain SC-B67).